We begin with the raw amino-acid sequence, 241 residues long: Probable transcriptional regulatory protein Daro_4067 (241 aa).

The disordered stretch occupies residues 1-22; sequence MAGHSKWANIQHRKGRQDEKRG.

The protein belongs to the TACO1 family.

It localises to the cytoplasm. The sequence is that of Probable transcriptional regulatory protein Daro_4067 from Dechloromonas aromatica (strain RCB).